Reading from the N-terminus, the 165-residue chain is 3-isopropylmalate dehydratase small subunit (165 aa).

Belongs to the LeuD family. LeuD type 2 subfamily. In terms of assembly, heterodimer of LeuC and LeuD.

The catalysed reaction is (2R,3S)-3-isopropylmalate = (2S)-2-isopropylmalate. It functions in the pathway amino-acid biosynthesis; L-leucine biosynthesis; L-leucine from 3-methyl-2-oxobutanoate: step 2/4. Catalyzes the isomerization between 2-isopropylmalate and 3-isopropylmalate, via the formation of 2-isopropylmaleate. The sequence is that of 3-isopropylmalate dehydratase small subunit from Saccharolobus islandicus (strain Y.G.57.14 / Yellowstone #1) (Sulfolobus islandicus).